Here is a 672-residue protein sequence, read N- to C-terminus: UvrABC system protein B (672 aa).

Residues 26–181 (AGLEDGLAYQ…ILQRLAELQY (156 aa)) enclose the Helicase ATP-binding domain. 39–46 (GVTGSGKT) provides a ligand contact to ATP. The short motif at 92–115 (YYDYYQPEAYVPSSDTYIEKDASI) is the Beta-hairpin element. The Helicase C-terminal domain maps to 430–592 (QVDDLLSEIK…ITPKSIQKAV (163 aa)). In terms of domain architecture, UVR spans 631 to 666 (AKELRKLEEQMYHHARNLEFEEAAAVRDKIQHIRKG).

Belongs to the UvrB family. As to quaternary structure, forms a heterotetramer with UvrA during the search for lesions. Interacts with UvrC in an incision complex.

It is found in the cytoplasm. Its function is as follows. The UvrABC repair system catalyzes the recognition and processing of DNA lesions. A damage recognition complex composed of 2 UvrA and 2 UvrB subunits scans DNA for abnormalities. Upon binding of the UvrA(2)B(2) complex to a putative damaged site, the DNA wraps around one UvrB monomer. DNA wrap is dependent on ATP binding by UvrB and probably causes local melting of the DNA helix, facilitating insertion of UvrB beta-hairpin between the DNA strands. Then UvrB probes one DNA strand for the presence of a lesion. If a lesion is found the UvrA subunits dissociate and the UvrB-DNA preincision complex is formed. This complex is subsequently bound by UvrC and the second UvrB is released. If no lesion is found, the DNA wraps around the other UvrB subunit that will check the other stand for damage. The polypeptide is UvrABC system protein B (Coxiella burnetii (strain CbuG_Q212) (Coxiella burnetii (strain Q212))).